Here is a 123-residue protein sequence, read N- to C-terminus: Small ribosomal subunit protein uS12 (123 aa).

At Asp89 the chain carries 3-methylthioaspartic acid.

Belongs to the universal ribosomal protein uS12 family. Part of the 30S ribosomal subunit. Contacts proteins S8 and S17. May interact with IF1 in the 30S initiation complex.

Its function is as follows. With S4 and S5 plays an important role in translational accuracy. Interacts with and stabilizes bases of the 16S rRNA that are involved in tRNA selection in the A site and with the mRNA backbone. Located at the interface of the 30S and 50S subunits, it traverses the body of the 30S subunit contacting proteins on the other side and probably holding the rRNA structure together. The combined cluster of proteins S8, S12 and S17 appears to hold together the shoulder and platform of the 30S subunit. The sequence is that of Small ribosomal subunit protein uS12 from Rhizobium leguminosarum bv. trifolii (strain WSM2304).